Consider the following 422-residue polypeptide: Dihydroorotase (422 aa).

Positions 59 and 61 each coordinate Zn(2+). Substrate is bound by residues H61–R63 and N93. Residues D150, H177, and H230 each coordinate Zn(2+). N276 is a substrate binding site. D303 provides a ligand contact to Zn(2+). D303 is a catalytic residue. Position 307 (H307) interacts with substrate.

The protein belongs to the metallo-dependent hydrolases superfamily. DHOase family. Class I DHOase subfamily. Zn(2+) is required as a cofactor.

It catalyses the reaction (S)-dihydroorotate + H2O = N-carbamoyl-L-aspartate + H(+). The protein operates within pyrimidine metabolism; UMP biosynthesis via de novo pathway; (S)-dihydroorotate from bicarbonate: step 3/3. Its function is as follows. Catalyzes the reversible cyclization of carbamoyl aspartate to dihydroorotate. The chain is Dihydroorotase from Streptococcus pneumoniae serotype 4 (strain ATCC BAA-334 / TIGR4).